The sequence spans 205 residues: Cytochrome c oxidase subunit 3 (205 aa).

5 helical membrane passes run 28-48, 72-92, 104-124, 142-162, and 184-204; these read GTIVFLSQELMFFAGLFAMYF, ALVITIILISSSVTAQFGVFA, WFSLTILLGAIFLVGQAYEYF, FFITTGFHAAHVLAGALAFVV, and SYYWHFVDVVWIGLFITIYFI.

This sequence belongs to the cytochrome c oxidase subunit 3 family. In terms of assembly, associates with subunits I, II and IV to form cytochrome c oxidase.

Its subcellular location is the cell membrane. It catalyses the reaction 4 Fe(II)-[cytochrome c] + O2 + 8 H(+)(in) = 4 Fe(III)-[cytochrome c] + 2 H2O + 4 H(+)(out). This Corynebacterium diphtheriae (strain ATCC 700971 / NCTC 13129 / Biotype gravis) protein is Cytochrome c oxidase subunit 3 (ctaE).